Reading from the N-terminus, the 183-residue chain is Acireductone dioxygenase (183 aa).

Fe(2+) contacts are provided by H95, H97, E101, and H139. Residues H95, H97, E101, and H139 each coordinate Ni(2+).

The protein belongs to the acireductone dioxygenase (ARD) family. As to quaternary structure, monomer. Fe(2+) is required as a cofactor. Requires Ni(2+) as cofactor.

The catalysed reaction is 1,2-dihydroxy-5-(methylsulfanyl)pent-1-en-3-one + O2 = 3-(methylsulfanyl)propanoate + CO + formate + 2 H(+). It carries out the reaction 1,2-dihydroxy-5-(methylsulfanyl)pent-1-en-3-one + O2 = 4-methylsulfanyl-2-oxobutanoate + formate + 2 H(+). It participates in amino-acid biosynthesis; L-methionine biosynthesis via salvage pathway; L-methionine from S-methyl-5-thio-alpha-D-ribose 1-phosphate: step 5/6. Functionally, catalyzes 2 different reactions between oxygen and the acireductone 1,2-dihydroxy-3-keto-5-methylthiopentene (DHK-MTPene) depending upon the metal bound in the active site. Fe-containing acireductone dioxygenase (Fe-ARD) produces formate and 2-keto-4-methylthiobutyrate (KMTB), the alpha-ketoacid precursor of methionine in the methionine recycle pathway. Ni-containing acireductone dioxygenase (Ni-ARD) produces methylthiopropionate, carbon monoxide and formate, and does not lie on the methionine recycle pathway. The chain is Acireductone dioxygenase from Hydrogenobaculum sp. (strain Y04AAS1).